A 185-amino-acid chain; its full sequence is Large ribosomal subunit protein uL5 (185 aa).

The protein belongs to the universal ribosomal protein uL5 family. Part of the 50S ribosomal subunit; part of the 5S rRNA/L5/L18/L25 subcomplex. Contacts the 5S rRNA and the P site tRNA. Forms a bridge to the 30S subunit in the 70S ribosome.

In terms of biological role, this is one of the proteins that bind and probably mediate the attachment of the 5S RNA into the large ribosomal subunit, where it forms part of the central protuberance. In the 70S ribosome it contacts protein S13 of the 30S subunit (bridge B1b), connecting the 2 subunits; this bridge is implicated in subunit movement. Contacts the P site tRNA; the 5S rRNA and some of its associated proteins might help stabilize positioning of ribosome-bound tRNAs. This is Large ribosomal subunit protein uL5 from Brucella abortus (strain S19).